A 38-amino-acid chain; its full sequence is Conotoxin r7a (38 aa).

The propeptide occupies 1–5 (APAKR). A 6'-bromotryptophan modification is found at tryptophan 6. 4-carboxyglutamate is present on residues glutamate 10 and glutamate 11. Cystine bridges form between cysteine 12–cysteine 26, cysteine 19–cysteine 30, and cysteine 25–cysteine 35. Residue tryptophan 15 is modified to 6'-bromotryptophan. Residues glutamate 20 and glutamate 31 each carry the 4-carboxyglutamate modification. The residue at position 38 (tryptophan 38) is a 6'-bromotryptophan.

The protein belongs to the conotoxin O2 superfamily. Expressed by the venom duct.

The protein resides in the secreted. In terms of biological role, induces a sleep-like state in mice. In Conus radiatus (Rayed cone), this protein is Conotoxin r7a.